Consider the following 502-residue polypeptide: Cytochrome P450 2J2 (502 aa).

Residue Cys-448 coordinates heme.

The protein belongs to the cytochrome P450 family. Heme serves as cofactor. In terms of tissue distribution, highly expressed in heart, present at lower levels in liver, kidney and skeletal muscle (at protein level).

The protein resides in the endoplasmic reticulum membrane. The protein localises to the microsome membrane. The catalysed reaction is (5Z,8Z,11Z,14Z)-eicosatetraenoate + reduced [NADPH--hemoprotein reductase] + O2 = 5,6-epoxy-(8Z,11Z,14Z)-eicosatrienoate + oxidized [NADPH--hemoprotein reductase] + H2O + H(+). It carries out the reaction (5Z,8Z,11Z,14Z)-eicosatetraenoate + reduced [NADPH--hemoprotein reductase] + O2 = (8R,9S)-epoxy-(5Z,11Z,14Z)-eicosatrienoate + oxidized [NADPH--hemoprotein reductase] + H2O + H(+). The enzyme catalyses (5Z,8Z,11Z,14Z)-eicosatetraenoate + reduced [NADPH--hemoprotein reductase] + O2 = (8S,9R)-epoxy-(5Z,11Z,14Z)-eicosatrienoate + oxidized [NADPH--hemoprotein reductase] + H2O + H(+). It catalyses the reaction (5Z,8Z,11Z,14Z)-eicosatetraenoate + reduced [NADPH--hemoprotein reductase] + O2 = (11R,12S)-epoxy-(5Z,8Z,14Z)-eicosatrienoate + oxidized [NADPH--hemoprotein reductase] + H2O + H(+). The catalysed reaction is (5Z,8Z,11Z,14Z)-eicosatetraenoate + reduced [NADPH--hemoprotein reductase] + O2 = (11S,12R)-epoxy-(5Z,8Z,14Z)-eicosatrienoate + oxidized [NADPH--hemoprotein reductase] + H2O + H(+). It carries out the reaction (5Z,8Z,11Z,14Z)-eicosatetraenoate + reduced [NADPH--hemoprotein reductase] + O2 = (14R,15S)-epoxy-(5Z,8Z,11Z)-eicosatrienoate + oxidized [NADPH--hemoprotein reductase] + H2O + H(+). The enzyme catalyses (5Z,8Z,11Z,14Z)-eicosatetraenoate + reduced [NADPH--hemoprotein reductase] + O2 = (14S,15R)-epoxy-(5Z,8Z,11Z)-eicosatrienoate + oxidized [NADPH--hemoprotein reductase] + H2O + H(+). It catalyses the reaction (15S)-hydroperoxy-(5Z,8Z,11Z,13E)-eicosatetraenoate = (13S)-hydroxy-(14S,15S)-epoxy-(5Z,8Z,11Z)-eicosatrienoate. The catalysed reaction is (15S)-hydroperoxy-(5Z,8Z,11Z,13E)-eicosatetraenoate = (13R)-hydroxy-(14S,15S)-epoxy-(5Z,8Z,11Z)-eicosatrienoate. It carries out the reaction (5Z,8Z,11Z,14Z,17Z)-eicosapentaenoate + reduced [NADPH--hemoprotein reductase] + O2 = (17R,18S)-epoxy-(5Z,8Z,11Z,14Z)-eicosatetraenoate + oxidized [NADPH--hemoprotein reductase] + H2O + H(+). The enzyme catalyses (5Z,8Z,11Z,14Z,17Z)-eicosapentaenoate + reduced [NADPH--hemoprotein reductase] + O2 = (17S,18R)-epoxy-(5Z,8Z,11Z,14Z)-eicosatetraenoate + oxidized [NADPH--hemoprotein reductase] + H2O + H(+). It catalyses the reaction (4Z,7Z,10Z,13Z,16Z,19Z)-docosahexaenoate + reduced [NADPH--hemoprotein reductase] + O2 = (19R,20S)-epoxy-(4Z,7Z,10Z,13Z,16Z)-docosapentaenoate + oxidized [NADPH--hemoprotein reductase] + H2O + H(+). The catalysed reaction is (4Z,7Z,10Z,13Z,16Z,19Z)-docosahexaenoate + reduced [NADPH--hemoprotein reductase] + O2 = (19S,20R)-epoxy-(4Z,7Z,10Z,13Z,16Z)-docosapentaenoate + oxidized [NADPH--hemoprotein reductase] + H2O + H(+). It carries out the reaction albendazole + reduced [NADPH--hemoprotein reductase] + O2 = hydroxyalbendazole + oxidized [NADPH--hemoprotein reductase] + H2O + H(+). The enzyme catalyses albendazole + reduced [NADPH--hemoprotein reductase] + O2 = albendazole S-oxide + oxidized [NADPH--hemoprotein reductase] + H2O + H(+). It catalyses the reaction fenbendazole + reduced [NADPH--hemoprotein reductase] + O2 = fenbendazole S-oxide + oxidized [NADPH--hemoprotein reductase] + H2O + H(+). It participates in lipid metabolism; arachidonate metabolism. Functionally, a cytochrome P450 monooxygenase involved in the metabolism of polyunsaturated fatty acids (PUFA) in the cardiovascular system. Mechanistically, uses molecular oxygen inserting one oxygen atom into a substrate, and reducing the second into a water molecule, with two electrons provided by NADPH via cytochrome P450 reductase (NADPH--hemoprotein reductase). Catalyzes the epoxidation of double bonds of PUFA. Converts arachidonic acid to four regioisomeric epoxyeicosatrienoic acids (EpETrE), likely playing a major role in the epoxidation of endogenous cardiac arachidonic acid pools. In endothelial cells, participates in eicosanoids metabolism by converting hydroperoxide species into hydroxy epoxy metabolites. In combination with 15-lipoxygenase metabolizes arachidonic acid and converts hydroperoxyicosatetraenoates (HpETEs) into hydroxy epoxy eicosatrienoates (HEETs), which are precursors of vasodilatory trihydroxyicosatrienoic acids (THETAs). This hydroperoxide isomerase activity is NADPH- and O2-independent. Catalyzes the monooxygenation of a various xenobiotics, such as danazol, amiodarone, terfenadine, astemizole, thioridazine, tamoxifen, cyclosporin A and nabumetone. Catalyzes hydroxylation of the anthelmintics albendazole and fenbendazole. Catalyzes the sulfoxidation of fenbedazole. The polypeptide is Cytochrome P450 2J2 (Homo sapiens (Human)).